The primary structure comprises 234 residues: Ribonuclease HII (234 aa).

Residues 30-221 enclose the RNase H type-2 domain; sequence GPVAGVDEAG…VRNAAMGSSL (192 aa). Residues aspartate 36, glutamate 37, and aspartate 130 each contribute to the a divalent metal cation site.

Belongs to the RNase HII family. Mn(2+) serves as cofactor. The cofactor is Mg(2+).

It localises to the cytoplasm. It catalyses the reaction Endonucleolytic cleavage to 5'-phosphomonoester.. Functionally, endonuclease that specifically degrades the RNA of RNA-DNA hybrids. This chain is Ribonuclease HII, found in Mycobacteroides abscessus (strain ATCC 19977 / DSM 44196 / CCUG 20993 / CIP 104536 / JCM 13569 / NCTC 13031 / TMC 1543 / L948) (Mycobacterium abscessus).